Consider the following 163-residue polypeptide: Phosphopantetheine adenylyltransferase (163 aa).

Residue Ser-10 coordinates substrate. ATP-binding positions include 10–11 (SF) and His-18. Residues Lys-42, Leu-78, and Lys-92 each contribute to the substrate site. ATP contacts are provided by residues 93-95 (GVR), Glu-103, and 127-133 (HAHVSSS).

The protein belongs to the bacterial CoaD family. In terms of assembly, homohexamer. It depends on Mg(2+) as a cofactor.

It is found in the cytoplasm. It catalyses the reaction (R)-4'-phosphopantetheine + ATP + H(+) = 3'-dephospho-CoA + diphosphate. Its pathway is cofactor biosynthesis; coenzyme A biosynthesis; CoA from (R)-pantothenate: step 4/5. Its function is as follows. Reversibly transfers an adenylyl group from ATP to 4'-phosphopantetheine, yielding dephospho-CoA (dPCoA) and pyrophosphate. The polypeptide is Phosphopantetheine adenylyltransferase (Clavibacter michiganensis subsp. michiganensis (strain NCPPB 382)).